The following is a 346-amino-acid chain: Serpentine receptor class beta-11 (346 aa).

7 helical membrane passes run 26-46, 57-77, 102-122, 139-159, 186-206, 239-259, and 278-298; these read YQMI…LFKL, TIFI…LTTS, IWNF…CSVT, SVVM…CIIF, FTFF…DLIL, VFLI…VVFF, and TFST…SSFF.

This sequence belongs to the nematode receptor-like protein srb family.

The protein localises to the membrane. In Caenorhabditis elegans, this protein is Serpentine receptor class beta-11 (srb-11).